The primary structure comprises 353 residues: Carbamoyl phosphate synthase small chain (353 aa).

The segment at 1 to 166 is CPSase; the sequence is MSDAYLALET…AETHGNGDTT (166 aa). L-glutamine-binding residues include serine 45, glycine 214, and glycine 216. The Glutamine amidotransferase type-1 domain maps to 166 to 349; the sequence is TVALVDCGAK…LAMADASYTP (184 aa). The active-site Nucleophile is the cysteine 241. 5 residues coordinate L-glutamine: leucine 242, glutamine 245, asparagine 283, glycine 285, and tyrosine 286. Catalysis depends on residues histidine 322 and glutamate 324.

It belongs to the CarA family. Composed of two chains; the small (or glutamine) chain promotes the hydrolysis of glutamine to ammonia, which is used by the large (or ammonia) chain to synthesize carbamoyl phosphate. Tetramer of heterodimers (alpha,beta)4.

The enzyme catalyses hydrogencarbonate + L-glutamine + 2 ATP + H2O = carbamoyl phosphate + L-glutamate + 2 ADP + phosphate + 2 H(+). It catalyses the reaction L-glutamine + H2O = L-glutamate + NH4(+). The protein operates within amino-acid biosynthesis; L-arginine biosynthesis; carbamoyl phosphate from bicarbonate: step 1/1. It functions in the pathway pyrimidine metabolism; UMP biosynthesis via de novo pathway; (S)-dihydroorotate from bicarbonate: step 1/3. In terms of biological role, small subunit of the glutamine-dependent carbamoyl phosphate synthetase (CPSase). CPSase catalyzes the formation of carbamoyl phosphate from the ammonia moiety of glutamine, carbonate, and phosphate donated by ATP, constituting the first step of 2 biosynthetic pathways, one leading to arginine and/or urea and the other to pyrimidine nucleotides. The small subunit (glutamine amidotransferase) binds and cleaves glutamine to supply the large subunit with the substrate ammonia. The chain is Carbamoyl phosphate synthase small chain from Halobacterium salinarum (strain ATCC 29341 / DSM 671 / R1).